Reading from the N-terminus, the 340-residue chain is Entry-fusion complex protein OPG094 (340 aa).

Residue Gly2 is the site of N-myristoyl glycine; by host attachment. At 2–319 (GGRVSVELPK…VQHNIKHSFD (318 aa)) the chain is on the virion surface side. A helical; Signal-anchor for type II membrane protein transmembrane segment spans residues 320-340 (LKLHLISLLSLLVIWILIVAI).

Belongs to the orthopoxvirus OPG086 family. In terms of assembly, interacts with OPG143. Component of the entry fusion complex (EFC) composed of OPG053, OPG076, OPG086, OPG094, OPG095, OPG099, OPG107, OPG143, OPG104, OPG147 and OPG155. Except for OPG095 and OPG053, each of the EFC proteins is required for assembly or stability of the complex. Post-translationally, unglycosylated because produced in viral factories instead of the classic ER -Golgi route.

The protein resides in the virion membrane. Component of the entry fusion complex (EFC), which consists of 11 proteins. During cell infection, this complex mediates entry of the virion core into the host cytoplasm by a two-step mechanism consisting of lipid mixing of the viral and cellular membranes and subsequent pore formation. The chain is Entry-fusion complex protein OPG094 (OPG094) from Homo sapiens (Human).